We begin with the raw amino-acid sequence, 457 residues long: ATP-dependent protease ATPase subunit HslU (457 aa).

Residues valine 21, 63-68 (GVGKTE), aspartate 269, glutamate 335, and arginine 407 contribute to the ATP site.

This sequence belongs to the ClpX chaperone family. HslU subfamily. As to quaternary structure, a double ring-shaped homohexamer of HslV is capped on each side by a ring-shaped HslU homohexamer. The assembly of the HslU/HslV complex is dependent on binding of ATP.

It is found in the cytoplasm. Its function is as follows. ATPase subunit of a proteasome-like degradation complex; this subunit has chaperone activity. The binding of ATP and its subsequent hydrolysis by HslU are essential for unfolding of protein substrates subsequently hydrolyzed by HslV. HslU recognizes the N-terminal part of its protein substrates and unfolds these before they are guided to HslV for hydrolysis. The protein is ATP-dependent protease ATPase subunit HslU of Desulfotalea psychrophila (strain LSv54 / DSM 12343).